A 161-amino-acid polypeptide reads, in one-letter code: 3-isopropylmalate dehydratase small subunit (161 aa).

Belongs to the LeuD family. LeuD type 2 subfamily. Heterodimer of LeuC and LeuD.

It catalyses the reaction (2R,3S)-3-isopropylmalate = (2S)-2-isopropylmalate. It functions in the pathway amino-acid biosynthesis; L-leucine biosynthesis; L-leucine from 3-methyl-2-oxobutanoate: step 2/4. Functionally, catalyzes the isomerization between 2-isopropylmalate and 3-isopropylmalate, via the formation of 2-isopropylmaleate. This is 3-isopropylmalate dehydratase small subunit from Sulfolobus acidocaldarius (strain ATCC 33909 / DSM 639 / JCM 8929 / NBRC 15157 / NCIMB 11770).